The primary structure comprises 203 residues: Ras-related protein Rab-7a (203 aa).

GTP is bound by residues 15 to 22 (GDSGVGKT), 34 to 40 (SNQYKAT), 63 to 67 (DTAGQ), 125 to 128 (NKID), and 157 to 158 (AK). The Effector region signature appears at 37–45 (YKATIGADF). 2 S-geranylgeranyl cysteine lipidation sites follow: C202 and C203.

Belongs to the small GTPase superfamily. Rab family.

It localises to the late endosome membrane. The protein resides in the lysosome membrane. It is found in the cytoplasmic vesicle. The protein localises to the autophagosome membrane. Its subcellular location is the lipid droplet. The catalysed reaction is GTP + H2O = GDP + phosphate + H(+). In terms of biological role, small GTPase which cycles between active GTP-bound and inactive GDP-bound states. In its active state, binds to a variety of effector proteins playing a key role in the regulation of endo-lysosomal trafficking. Governs early-to-late endosomal maturation, microtubule minus-end as well as plus-end directed endosomal migration and positioning, and endosome-lysosome transport through different protein-protein interaction cascades. Involved in lipophagy, a cytosolic lipase-independent autophagic pathway. In Dictyostelium discoideum (Social amoeba), this protein is Ras-related protein Rab-7a (rab7A).